A 561-amino-acid chain; its full sequence is Dihydroxy-acid dehydratase (561 aa).

Residue Cys50 participates in [2Fe-2S] cluster binding. Asp82 contributes to the Mg(2+) binding site. Residue Cys123 participates in [2Fe-2S] cluster binding. Asp124 and Lys125 together coordinate Mg(2+). An N6-carboxylysine modification is found at Lys125. Cys195 is a [2Fe-2S] cluster binding site. Glu447 serves as a coordination point for Mg(2+). Ser473 serves as the catalytic Proton acceptor.

The protein belongs to the IlvD/Edd family. Homodimer. Requires [2Fe-2S] cluster as cofactor. Mg(2+) is required as a cofactor.

It catalyses the reaction (2R)-2,3-dihydroxy-3-methylbutanoate = 3-methyl-2-oxobutanoate + H2O. It carries out the reaction (2R,3R)-2,3-dihydroxy-3-methylpentanoate = (S)-3-methyl-2-oxopentanoate + H2O. It participates in amino-acid biosynthesis; L-isoleucine biosynthesis; L-isoleucine from 2-oxobutanoate: step 3/4. The protein operates within amino-acid biosynthesis; L-valine biosynthesis; L-valine from pyruvate: step 3/4. Functions in the biosynthesis of branched-chain amino acids. Catalyzes the dehydration of (2R,3R)-2,3-dihydroxy-3-methylpentanoate (2,3-dihydroxy-3-methylvalerate) into 2-oxo-3-methylpentanoate (2-oxo-3-methylvalerate) and of (2R)-2,3-dihydroxy-3-methylbutanoate (2,3-dihydroxyisovalerate) into 2-oxo-3-methylbutanoate (2-oxoisovalerate), the penultimate precursor to L-isoleucine and L-valine, respectively. The chain is Dihydroxy-acid dehydratase from Crocosphaera subtropica (strain ATCC 51142 / BH68) (Cyanothece sp. (strain ATCC 51142)).